The sequence spans 1675 residues: Clathrin heavy chain 1 (1675 aa).

At alanine 2 the chain carries N-acetylalanine. A globular terminal domain region spans residues 2–479 (AQILPIRFQE…VDPTLALSVY (478 aa)). 7 WD40-like repeat regions span residues 24–67 (NIGF…RPIS), 68–107 (ADSA…MTDD), 108–149 (VTFW…SSLA), 150–195 (GCQI…QPIE), 196–257 (GHAA…PEAQ), 258–301 (NDFP…ISGE), and 302–330 (TIFV…VCVE). Serine 67 carries the post-translational modification Phosphoserine. Threonine 105 carries the phosphothreonine modification. Position 184 is a phosphotyrosine (tyrosine 184). The residue at position 394 (threonine 394) is a Phosphothreonine. Residues 449–465 (EKWLKEDKLECSEELGD) are binding site for the uncoating ATPase, involved in lattice disassembly. The tract at residues 480 to 523 (LRANVPNKVIQCFAETGQVQKIVLYAKKVGYTPDWIFLLRNVMR) is flexible linker. The tract at residues 524-634 (ISPDQGQQFA…RALEHFTDLY (111 aa)) is distal segment. Positions 524–1675 (ISPDQGQQFA…QPQPGFGYSM (1152 aa)) are heavy chain arm. 7 CHCR repeats span residues 537-683 (VQDE…QICV), 686-828 (ASKY…SEDV), 833-972 (ILVV…PLID), 979-1124 (LSET…VKEA), 1128-1269 (YIKA…FRLA), 1274-1420 (LHIV…LLLN), and 1423-1566 (LMVL…RECF). Phosphotyrosine is present on tyrosine 634. The interval 639–1675 (AVVHTHLLNP…QPQPGFGYSM (1037 aa)) is proximal segment. N6-succinyllysine is present on lysine 737. Lysine 856 carries the N6-acetyllysine modification. Tyrosine 899 carries the phosphotyrosine modification. Phosphoserine is present on serine 1167. Tyrosine 1206 carries the phosphotyrosine modification. The tract at residues 1213–1522 (AAKLLYNNVS…YLFKGNNRWK (310 aa)) is involved in binding clathrin light chain. A Phosphoserine modification is found at serine 1229. Lysine 1441 carries the N6-acetyllysine; alternate modification. Residue lysine 1441 is modified to N6-succinyllysine; alternate. Residues tyrosine 1477 and tyrosine 1487 each carry the phosphotyrosine modification. Serine 1494 bears the Phosphoserine mark. An N6-acetyllysine modification is found at lysine 1501. Residues 1550-1675 (AEELLQWFLQ…QPQPGFGYSM (126 aa)) form a trimerization region.

The protein belongs to the clathrin heavy chain family. As to quaternary structure, clathrin triskelions, composed of 3 heavy chains and 3 light chains, are the basic subunits of the clathrin coat. In the presence of light chains, hub assembly is influenced by both the pH and the concentration of calcium. Interacts with HIP1. Interacts with DENND1A, DENND1B and DENND1C. Interacts with OCRL. Interacts with ERBB2. Interacts with FKBP6. Interacts with CKAP5 and TACC3 forming the TACC3/ch-TOG/clathrin complex located at spindle inter-microtubules bridges; the complex implicates clathrin triskelions; TACC3 and CLTC are proposed to form a composite microtubule interaction surface. Interacts with ATG16L1 (via N-terminus). Interacts with RFTN1; the interaction occurs in response to pathogens. Interacts with TMEM106B (via N-terminus). Interacts with DNAJC6; this interaction produces a local change in heavy-chain contacts, creating a detectable global distortion of the clathrin coat and leads to the recruitment of HSPA8.

The protein localises to the cytoplasmic vesicle membrane. It localises to the membrane. Its subcellular location is the coated pit. The protein resides in the melanosome. It is found in the cytoplasm. The protein localises to the cytoskeleton. It localises to the spindle. Clathrin is the major protein of the polyhedral coat of coated pits and vesicles. Two different adapter protein complexes link the clathrin lattice either to the plasma membrane or to the trans-Golgi network. Acts as a component of the TACC3/ch-TOG/clathrin complex proposed to contribute to stabilization of kinetochore fibers of the mitotic spindle by acting as inter-microtubule bridge. The TACC3/ch-TOG/clathrin complex is required for the maintenance of kinetochore fiber tension. Plays a role in early autophagosome formation. Interaction with DNAJC6 mediates the recruitment of HSPA8 to the clathrin lattice and creates local destabilization of the lattice promoting uncoating. In Bos taurus (Bovine), this protein is Clathrin heavy chain 1.